The following is a 221-amino-acid chain: 7-cyano-7-deazaguanine synthase (221 aa).

ATP is bound at residue 7 to 17 (LSGGLDSAVSL). Residues Cys192, Cys200, Cys203, and Cys206 each coordinate Zn(2+).

This sequence belongs to the QueC family. Homodimer. It depends on Zn(2+) as a cofactor.

The enzyme catalyses 7-carboxy-7-deazaguanine + NH4(+) + ATP = 7-cyano-7-deazaguanine + ADP + phosphate + H2O + H(+). It participates in purine metabolism; 7-cyano-7-deazaguanine biosynthesis. Functionally, catalyzes the ATP-dependent conversion of 7-carboxy-7-deazaguanine (CDG) to 7-cyano-7-deazaguanine (preQ(0)). This chain is 7-cyano-7-deazaguanine synthase, found in Pelotomaculum thermopropionicum (strain DSM 13744 / JCM 10971 / SI).